Consider the following 876-residue polypeptide: Alanine--tRNA ligase (876 aa).

H562, H566, C666, and H670 together coordinate Zn(2+).

It belongs to the class-II aminoacyl-tRNA synthetase family. The cofactor is Zn(2+).

It localises to the cytoplasm. It carries out the reaction tRNA(Ala) + L-alanine + ATP = L-alanyl-tRNA(Ala) + AMP + diphosphate. Its function is as follows. Catalyzes the attachment of alanine to tRNA(Ala) in a two-step reaction: alanine is first activated by ATP to form Ala-AMP and then transferred to the acceptor end of tRNA(Ala). Also edits incorrectly charged Ser-tRNA(Ala) and Gly-tRNA(Ala) via its editing domain. This chain is Alanine--tRNA ligase, found in Marinobacter nauticus (strain ATCC 700491 / DSM 11845 / VT8) (Marinobacter aquaeolei).